The primary structure comprises 210 residues: Small ribosomal subunit protein uS3 (210 aa).

Positions 39 to 107 constitute a KH type-2 domain; the sequence is IREKLMEKLK…EILLDIQEVK (69 aa).

The protein belongs to the universal ribosomal protein uS3 family. As to quaternary structure, part of the 30S ribosomal subunit. Forms a tight complex with proteins S10 and S14.

Functionally, binds the lower part of the 30S subunit head. Binds mRNA in the 70S ribosome, positioning it for translation. This is Small ribosomal subunit protein uS3 from Opitutus terrae (strain DSM 11246 / JCM 15787 / PB90-1).